The chain runs to 720 residues: Armadillo repeat-containing protein 8 (720 aa).

ARM repeat units lie at residues 51–92 (NKQK…SLSM), 95–134 (ENNV…TVFT), 138–176 (TPVE…HCCK), 178–217 (PDHQ…VLAF), 224–265 (MTLA…YMCR), 269–309 (IRTD…YLIE), 313–352 (ELQR…ETGQ), 421–460 (DIRK…SLSR), 463–502 (QQLR…NLLL), 505–544 (SPSK…NMAF), 548–587 (QKIK…NLLS), 590–632 (PHID…NIAD), 635–674 (TAKD…NLTW), and 681–720 (QERQ…QYFA).

Identified in the CTLH complex that contains at least MAEA, RMND5A (or alternatively its paralog RMND5B), GID8, WDR26, and RANBP9 and/or RANBP10; ARMC8 has an ancillary role in the complex.

It localises to the nucleus. Its subcellular location is the cytoplasm. Its function is as follows. Component of the CTLH E3 ubiquitin-protein ligase complex that mediates ubiquitination and subsequent proteasomal degradation of target proteins. The chain is Armadillo repeat-containing protein 8 (armc8) from Xenopus laevis (African clawed frog).